A 254-amino-acid chain; its full sequence is 5'-nucleotidase SurE (254 aa).

Asp-8, Asp-9, Ser-40, and Asn-93 together coordinate a divalent metal cation.

It belongs to the SurE nucleotidase family. It depends on a divalent metal cation as a cofactor.

It localises to the cytoplasm. The enzyme catalyses a ribonucleoside 5'-phosphate + H2O = a ribonucleoside + phosphate. In terms of biological role, nucleotidase that shows phosphatase activity on nucleoside 5'-monophosphates. This Methylorubrum populi (strain ATCC BAA-705 / NCIMB 13946 / BJ001) (Methylobacterium populi) protein is 5'-nucleotidase SurE.